The chain runs to 43 residues: Protein PsbN (43 aa).

The chain crosses the membrane as a helical span at residues 5–27; sequence TLIAISISGLIVSFTGYALYTAF.

The protein belongs to the PsbN family.

Its subcellular location is the plastid. It localises to the chloroplast thylakoid membrane. Functionally, may play a role in photosystem I and II biogenesis. This Cicer arietinum (Chickpea) protein is Protein PsbN.